The following is a 472-amino-acid chain: Aspartyl/glutamyl-tRNA(Asn/Gln) amidotransferase subunit B (472 aa).

Belongs to the GatB/GatE family. GatB subfamily. In terms of assembly, heterotrimer of A, B and C subunits.

The enzyme catalyses L-glutamyl-tRNA(Gln) + L-glutamine + ATP + H2O = L-glutaminyl-tRNA(Gln) + L-glutamate + ADP + phosphate + H(+). The catalysed reaction is L-aspartyl-tRNA(Asn) + L-glutamine + ATP + H2O = L-asparaginyl-tRNA(Asn) + L-glutamate + ADP + phosphate + 2 H(+). Functionally, allows the formation of correctly charged Asn-tRNA(Asn) or Gln-tRNA(Gln) through the transamidation of misacylated Asp-tRNA(Asn) or Glu-tRNA(Gln) in organisms which lack either or both of asparaginyl-tRNA or glutaminyl-tRNA synthetases. The reaction takes place in the presence of glutamine and ATP through an activated phospho-Asp-tRNA(Asn) or phospho-Glu-tRNA(Gln). This chain is Aspartyl/glutamyl-tRNA(Asn/Gln) amidotransferase subunit B, found in Elusimicrobium minutum (strain Pei191).